The sequence spans 140 residues: Nucleoside diphosphate kinase (140 aa).

Positions 11, 59, 87, 93, 104, and 114 each coordinate ATP. H117 functions as the Pros-phosphohistidine intermediate in the catalytic mechanism.

Belongs to the NDK family. Homotetramer. The cofactor is Mg(2+).

The protein localises to the cytoplasm. It carries out the reaction a 2'-deoxyribonucleoside 5'-diphosphate + ATP = a 2'-deoxyribonucleoside 5'-triphosphate + ADP. It catalyses the reaction a ribonucleoside 5'-diphosphate + ATP = a ribonucleoside 5'-triphosphate + ADP. Functionally, major role in the synthesis of nucleoside triphosphates other than ATP. The ATP gamma phosphate is transferred to the NDP beta phosphate via a ping-pong mechanism, using a phosphorylated active-site intermediate. In Bradyrhizobium sp. (strain ORS 278), this protein is Nucleoside diphosphate kinase.